A 371-amino-acid polypeptide reads, in one-letter code: Jasmonate-induced oxygenase 2 (371 aa).

The Fe2OG dioxygenase domain maps to 219-320; that stretch reads NIGACLRVNY…RVSLAFFYNP (102 aa). Arg225 is a jasmonate binding site. Positions 227 and 229 each coordinate 2-oxoglutarate. Residues His244, Asp246, and His301 each coordinate Fe cation. Residues Arg311 and Ser313 each coordinate 2-oxoglutarate. Jasmonate is bound by residues Arg350 and Arg354.

Belongs to the iron/ascorbate-dependent oxidoreductase family. L-ascorbate serves as cofactor. The cofactor is Fe(2+).

The enzyme catalyses jasmonate + 2-oxoglutarate + O2 = (1R,2R)-12-hydroxyjasmonate + succinate + CO2. Functionally, 2-oxoglutarate-dependent dioxygenase involved in the oxidation of jasmonate (JA), a stress-induced phytohormone synthesized in response to attack by pathogens and herbivores, which triggers the activation of defense responses via the JA-mediated signaling pathway. Converts JA to 12-hydroxyjasmonate (12OH-JA), an inactive form of JA. Is specific to free JA, and cannot oxidize the bioactive form jasmonoyl-L-isoleucine (JA-Ile) or other JA-amino acid conjugates. Prevents over-accumulation of JA and indirectly its bioactive form JA-Ile under stress response. Acts as a negative regulator of JA-mediated defense signaling, by contributing to 12OH-JA accumulation, which represses JA defense responses upon infection by the fungal pathogen Botrytis cinerea. Acts as a negative regulator of JA-mediated defense responses upon infestation by the herbivorous caterpillar Mamestra brassicae. May be involved in the catabolism of cytotoxic polycyclic aromatic hydrocarbons (PAHs). The sequence is that of Jasmonate-induced oxygenase 2 from Arabidopsis thaliana (Mouse-ear cress).